We begin with the raw amino-acid sequence, 81 residues long: Exodeoxyribonuclease 7 small subunit (81 aa).

Belongs to the XseB family. In terms of assembly, heterooligomer composed of large and small subunits.

It is found in the cytoplasm. It carries out the reaction Exonucleolytic cleavage in either 5'- to 3'- or 3'- to 5'-direction to yield nucleoside 5'-phosphates.. Bidirectionally degrades single-stranded DNA into large acid-insoluble oligonucleotides, which are then degraded further into small acid-soluble oligonucleotides. In Paramagnetospirillum magneticum (strain ATCC 700264 / AMB-1) (Magnetospirillum magneticum), this protein is Exodeoxyribonuclease 7 small subunit.